Here is a 152-residue protein sequence, read N- to C-terminus: Transcriptional regulator MraZ (152 aa).

SpoVT-AbrB domains are found at residues 5–52 (ATLV…PLPE) and 81–124 (ASEC…DETT).

This sequence belongs to the MraZ family. In terms of assembly, forms oligomers.

The protein localises to the cytoplasm. Its subcellular location is the nucleoid. Negatively regulates its own expression and that of the subsequent genes in the proximal part of the division and cell wall (dcw) gene cluster. Acts by binding directly to DNA. May also regulate the expression of genes outside the dcw cluster. The chain is Transcriptional regulator MraZ from Shigella sonnei (strain Ss046).